We begin with the raw amino-acid sequence, 485 residues long: Glutamate--tRNA ligase 1 (485 aa).

The short motif at 10-20 (PSPTGAIHIGN) is the 'HIGH' region element. The 'KMSKS' region signature appears at 252–256 (KLSKR). K255 is an ATP binding site.

It belongs to the class-I aminoacyl-tRNA synthetase family. Glutamate--tRNA ligase type 1 subfamily. Monomer.

It localises to the cytoplasm. The enzyme catalyses tRNA(Glu) + L-glutamate + ATP = L-glutamyl-tRNA(Glu) + AMP + diphosphate. Its function is as follows. Catalyzes the attachment of glutamate to tRNA(Glu) in a two-step reaction: glutamate is first activated by ATP to form Glu-AMP and then transferred to the acceptor end of tRNA(Glu). This is Glutamate--tRNA ligase 1 from Thermoanaerobacter pseudethanolicus (strain ATCC 33223 / 39E) (Clostridium thermohydrosulfuricum).